Reading from the N-terminus, the 267-residue chain is Proenkephalin-A (267 aa).

The signal sequence occupies residues methionine 1 to alanine 24. Disulfide bonds link cysteine 26–cysteine 48, cysteine 30–cysteine 52, and cysteine 33–cysteine 65. The span at threonine 163–glycine 175 shows a compositional bias: basic and acidic residues. Positions threonine 163–valine 182 are disordered. 2 consecutive propeptides follow at residues serine 196–glutamine 207 and valine 217–glutamine 227. Serine 251 carries the post-translational modification Phosphoserine.

This sequence belongs to the opioid neuropeptide precursor family. Proenkephalin-A is cleaved by CTSL to generate Met-enkephalin. In terms of processing, processed and degraded by ACE. Post-translationally, probably cleaved by ACE. Processed by ACE to generate Met-enkephalin in the nucleus accumbens of the brain. In terms of processing, the N-terminal domain contains 6 conserved cysteines thought to be involved in disulfide bonding and/or processing.

It localises to the cytoplasmic vesicle. The protein resides in the secretory vesicle. Its subcellular location is the chromaffin granule lumen. The protein localises to the secreted. Neuropeptide that competes with and mimic the effects of opiate drugs. They play a role in a number of physiologic functions, including pain perception and responses to stress. Functionally, met-enkephalin-Arg-Phe neuropeptide acts as a strong ligand of Mu-type opioid receptor OPRM1. Met-enkephalin-Arg-Phe-binding to OPRM1 in the nucleus accumbens of the brain increases activation of OPRM1, leading to long-term synaptic depression of glutamate release. Its function is as follows. Increases glutamate release in the striatum and decreases GABA concentration in the striatum. In terms of biological role, increases glutamate release in the striatum. In Homo sapiens (Human), this protein is Proenkephalin-A.